A 400-amino-acid chain; its full sequence is Acetate kinase (400 aa).

Position 10 (Asn-10) interacts with Mg(2+). Lys-17 is a binding site for ATP. Substrate is bound at residue Arg-91. Asp-148 serves as the catalytic Proton donor/acceptor. ATP is bound by residues 208–212, 283–285, and 331–335; these read HLGNG, DCR, and GIGEN. Residue Glu-385 participates in Mg(2+) binding.

The protein belongs to the acetokinase family. As to quaternary structure, homodimer. Requires Mg(2+) as cofactor. It depends on Mn(2+) as a cofactor.

It localises to the cytoplasm. The catalysed reaction is acetate + ATP = acetyl phosphate + ADP. It participates in metabolic intermediate biosynthesis; acetyl-CoA biosynthesis; acetyl-CoA from acetate: step 1/2. In terms of biological role, catalyzes the formation of acetyl phosphate from acetate and ATP. Can also catalyze the reverse reaction. The protein is Acetate kinase of Shewanella frigidimarina (strain NCIMB 400).